A 416-amino-acid polypeptide reads, in one-letter code: Serine hydroxymethyltransferase (416 aa).

Residues L121 and 125–127 contribute to the (6S)-5,6,7,8-tetrahydrofolate site; that span reads GHL. An N6-(pyridoxal phosphate)lysine modification is found at K230. 355–357 contacts (6S)-5,6,7,8-tetrahydrofolate; sequence SPF.

Belongs to the SHMT family. In terms of assembly, homodimer. Pyridoxal 5'-phosphate serves as cofactor.

The protein resides in the cytoplasm. It carries out the reaction (6R)-5,10-methylene-5,6,7,8-tetrahydrofolate + glycine + H2O = (6S)-5,6,7,8-tetrahydrofolate + L-serine. It participates in one-carbon metabolism; tetrahydrofolate interconversion. Its pathway is amino-acid biosynthesis; glycine biosynthesis; glycine from L-serine: step 1/1. Functionally, catalyzes the reversible interconversion of serine and glycine with tetrahydrofolate (THF) serving as the one-carbon carrier. This reaction serves as the major source of one-carbon groups required for the biosynthesis of purines, thymidylate, methionine, and other important biomolecules. Also exhibits THF-independent aldolase activity toward beta-hydroxyamino acids, producing glycine and aldehydes, via a retro-aldol mechanism. This chain is Serine hydroxymethyltransferase, found in Streptococcus thermophilus (strain ATCC BAA-250 / LMG 18311).